The primary structure comprises 580 residues: (3S,6E)-nerolidol synthase 1, chloroplastic (580 aa).

Residues M1–Q31 constitute a chloroplast transit peptide. Residues D334, D338, D478, S482, and E486 each contribute to the Mg(2+) site. Positions D334–D338 match the DDXXD motif motif.

Belongs to the terpene synthase family. Tpsg subfamily. Mg(2+) is required as a cofactor. The cofactor is Mn(2+).

The protein localises to the plastid. It is found in the chloroplast. It catalyses the reaction (2E,6E)-farnesyl diphosphate + H2O = (3S,6E)-nerolidol + diphosphate. Its pathway is secondary metabolite biosynthesis; terpenoid biosynthesis. Involved in monoterpene (C10) and sesquiterpene (C15) biosynthesis. Converts geranyl diphosphate (GPP) into S-linalool and farnesyl diphosphate (FPP) into (3S)-E-nerolidol. Probably not expressed in wild strawberry species. This is (3S,6E)-nerolidol synthase 1, chloroplastic from Fragaria vesca (Woodland strawberry).